The sequence spans 4599 residues: Low-density lipoprotein receptor-related protein 1B (4599 aa).

Residues 1–20 (MSEFLLALLTLSGLLPIARV) form the signal peptide. The Extracellular segment spans residues 25–4444 (ADRDQQLCDP…KSDHISTRSI (4420 aa)). 2 consecutive LDL-receptor class A domains span residues 31–70 (LCDP…DTCP) and 76–114 (KCPL…VHCQ). 12 disulfides stabilise this stretch: C32–C45, C39–C58, C52–C69, C77–C90, C84–C103, C97–C113, C120–C129, C125–C138, C140–C153, C159–C169, C165–C178, and C180–C193. Positions 116–154 (LLSNCQQLNCQYKCTMVRNSTRCYCEDGFEITEDGRSCK) constitute an EGF-like 1 domain. Residue N134 is glycosylated (N-linked (GlcNAc...) asparagine). In terms of domain architecture, EGF-like 2; calcium-binding spans 155–194 (DQDECAVYGTCSQTCRNTHGSYTCSCVEGYLMQPDNRSCK). N190, N220, N313, and N360 each carry an N-linked (GlcNAc...) asparagine glycan. 3 LDL-receptor class B repeats span residues 295–337 (RNLY…DPIA), 338–381 (GKLF…DLVN), and 382–425 (KLVY…FEDY). N-linked (GlcNAc...) asparagine glycosylation is present at N443. An EGF-like 3 domain is found at 471-517 (RSHACEVDPYGMPGGCSHICLLSSSYKTRTCRCRTGFNLGSDGRSCK). 4 LDL-receptor class B repeats span residues 568-610 (NYIY…DWIG), 611-656 (NNLY…DPVN), 657-706 (GWMY…DFHT), and 707-750 (NTLY…HGNY). N-linked (GlcNAc...) asparagine glycans are attached at residues N725 and N758. In terms of domain architecture, EGF-like 4 spans 794–834 (GDNMCRVNNGGCSTLCLAIPGGRVCACADNQLLDENGTTCT). 6 cysteine pairs are disulfide-bonded: C798-C809, C805-C818, C820-C833, C845-C857, C852-C870, and C864-C881. Residue N829 is glycosylated (N-linked (GlcNAc...) asparagine). The LDL-receptor class A 3 domain occupies 844–882 (ICKAGEFRCKNRHCIQARWKCDGDDDCLDGSDEDSVNCF). N-linked (GlcNAc...) asparagine glycosylation occurs at N883. LDL-receptor class A domains follow at residues 885–923 (SCPD…QTCT), 926–963 (TCQV…ASCE), 966–1003 (TCEP…VGCV), 1005–1043 (SCFD…INCT), 1052–1089 (GCNG…KGCN), 1094–1132 (LCDH…DDCD), and 1135–1174 (LCGP…YLCD). Disulfide bonds link C886–C898, C893–C911, C905–C922, C927–C939, C934–C952, C946–C962, C967–C980, C975–C993, C987–C1002, C1006–C1018, C1013–C1031, C1025–C1042, C1053–C1066, C1060–C1079, and C1073–C1088. A glycan (N-linked (GlcNAc...) asparagine) is linked at N919. N1041 carries an N-linked (GlcNAc...) asparagine glycan. An N-linked (GlcNAc...) asparagine glycan is attached at N1089. 6 disulfides stabilise this stretch: C1095-C1109, C1103-C1122, C1116-C1131, C1136-C1150, C1143-C1163, and C1157-C1173. N1145 is a glycosylation site (N-linked (GlcNAc...) asparagine). EGF-like domains follow at residues 1174–1213 (DECS…KTCE) and 1214–1253 (IVDY…ESCT). N1209 is a glycosylation site (N-linked (GlcNAc...) asparagine). N1298 is a glycosylation site (N-linked (GlcNAc...) asparagine). LDL-receptor class B repeat units follow at residues 1300–1346 (SLLY…DWIA), 1347–1389 (GNIY…DPRY), 1390–1436 (GILF…DHFE), 1437–1480 (KRIV…LYGS), and 1481–1522 (EVYW…YHPS). N-linked (GlcNAc...) asparagine glycosylation is found at N1502, N1549, and N1636. An EGF-like 7 domain is found at 1527–1570 (APNPCAANDGKGPCSHMCLINHNRSAACACPHLMKLSSDKKTCY). LDL-receptor class B repeat units follow at residues 1618 to 1660 (ERLY…DWVS), 1661 to 1704 (RNLY…HPVR), 1705 to 1744 (GKLY…DYVE), and 1745 to 1787 (NKLY…TIMD). 2 N-linked (GlcNAc...) asparagine glycosylation sites follow: N1754 and N1816. An EGF-like 8 domain is found at 1834–1875 (GSNSCQLNNGGCSQLCLPTSETTRTCMCTVGYYLQKNRMSCQ). Intrachain disulfides connect C1838/C1849, C1845/C1859, and C1861/C1874. N1921 carries an N-linked (GlcNAc...) asparagine glycan. LDL-receptor class B repeat units lie at residues 1922 to 1964 (DTIY…DWIA), 1965 to 2007 (GNIY…HPEK), 2008 to 2051 (GLLF…DYEE), and 2052 to 2095 (NKLY…FGAY). An N-linked (GlcNAc...) asparagine glycan is attached at N1983. The N-linked (GlcNAc...) asparagine glycan is linked to N2105. Positions 2143-2183 (GTNVCARDNGGCKQLCLYRGNSRRTCACAHGYLAEDGVTCL) constitute an EGF-like 9 domain. 3 cysteine pairs are disulfide-bonded: C2147–C2158, C2154–C2168, and C2170–C2182. LDL-receptor class B repeat units lie at residues 2239-2280 (NRIF…HRAW), 2281-2329 (DTLY…DECQ), 2330-2374 (NLMF…DYRA), 2375-2416 (EKLY…VYDN), and 2417-2459 (YIFW…VAND). 3 N-linked (GlcNAc...) asparagine glycosylation sites follow: N2458, N2488, and N2507. Residues 2464 to 2504 (ELSPCALLNGGCHDLCLLTPNGRVNCSCRGDRILLEDNRCV) enclose the EGF-like 10 domain. The 40-residue stretch at 2509–2548 (SCNAYSEFECGNGECIDYQLTCDGIPHCKDKSDEKLLYCE) folds into the LDL-receptor class A 11 domain. Cystine bridges form between C2510–C2523, C2518–C2536, and C2530–C2547. N-linked (GlcNAc...) asparagine glycosylation is present at N2549. LDL-receptor class A domains are found at residues 2551 to 2587 (SCRR…LDCK), 2590 to 2626 (TCAT…KNCN), 2629 to 2675 (DCTH…LKCP), 2681 to 2717 (KCEE…FHCD), 2719 to 2757 (SCSW…SICG), and 2760 to 2800 (TCAA…AGCA). Intrachain disulfides connect C2552–C2564, C2559–C2577, C2571–C2586, C2591–C2603, C2598–C2616, and C2610–C2625. N-linked (GlcNAc...) asparagine glycans are attached at residues N2626 and N2647. Disulfide bonds link C2630–C2652, C2646–C2665, C2659–C2674, C2682–C2694, C2689–C2707, C2701–C2716, C2720–C2732, C2727–C2745, C2739–C2756, C2761–C2774, C2768–C2787, and C2781–C2799. N-linked (GlcNAc...) asparagine glycosylation is present at N2802. LDL-receptor class A domains follow at residues 2804 to 2841 (TCDE…PQCG), 2844 to 2885 (QCGT…PKCK), and 2890 to 2926 (SCNS…RNCH). 15 disulfides stabilise this stretch: C2805-C2817, C2812-C2830, C2824-C2840, C2845-C2857, C2852-C2871, C2865-C2884, C2891-C2903, C2898-C2916, C2910-C2925, C2930-C2942, C2938-C2951, C2953-C2966, C2972-C2982, C2978-C2991, and C2993-C3007. N2892 carries an N-linked (GlcNAc...) asparagine glycan. In terms of domain architecture, EGF-like 11 spans 2927–2967 (INECLSKKVSGCSQDCQDLPVSYKCKCWPGFQLKDDGKTCV). The EGF-like 12; calcium-binding domain maps to 2968 to 3008 (DIDECSSGFPCSQQCINTYGTYKCLCTDGYEIQPDNPNGCK). N-linked (GlcNAc...) asparagine glycans are attached at residues N3034, N3066, and N3076. 5 LDL-receptor class B repeats span residues 3055–3098 (EFIY…DWIG), 3099–3141 (KNLY…DPQA), 3142–3185 (GYLY…DYVN), 3186–3224 (RRLY…TLFE), and 3225–3268 (DYIY…HSYR). N3164 carries N-linked (GlcNAc...) asparagine glycosylation. The EGF-like 13 domain occupies 3273 to 3314 (SKHLCMINNGGCSHLCLLAPGKTHTCACPTNFYLAADNRTCL). Residues N3310 and N3316 are each glycosylated (N-linked (GlcNAc...) asparagine). LDL-receptor class A domains follow at residues 3316–3353 (NCTA…DDCP), 3356–3392 (RCQP…LNCD), 3395–3432 (VCLS…RDCP), 3435–3472 (SCSP…ANCD), 3475–3511 (TCGP…ENCK), 3514–3550 (TCTL…RNCE), 3552–3588 (SCSK…KSCE), 3593–3629 (TCSS…MDCV), 3631–3668 (ECKE…ENCE), 3673–3711 (ICRA…DMCV), 3714–3752 (LCPS…DHCG), and 3761–3797 (PCKK…QGCR). Disulfide bonds link C3317–C3329, C3324–C3342, C3336–C3352, C3357–C3369, C3364–C3382, C3376–C3391, C3396–C3409, C3403–C3422, C3416–C3431, C3436–C3449, C3443–C3462, C3456–C3471, C3476–C3488, C3483–C3501, C3495–C3510, C3515–C3527, C3522–C3540, C3534–C3549, C3553–C3565, C3560–C3578, C3572–C3587, C3594–C3606, C3601–C3619, C3613–C3628, C3632–C3645, C3639–C3658, C3652–C3667, C3674–C3686, C3681–C3699, C3693–C3710, C3715–C3729, C3723–C3742, C3736–C3751, C3762–C3774, C3769–C3787, C3781–C3796, C3805–C3818, C3812–C3827, C3829–C3842, C3848–C3858, C3854–C3867, and C3869–C3880. N-linked (GlcNAc...) asparagine glycosylation occurs at N3682. EGF-like domains follow at residues 3801–3843 (TEYT…RQCE) and 3844–3881 (DLNE…NTCI). N3877, N3894, and N3906 each carry an N-linked (GlcNAc...) asparagine glycan. LDL-receptor class B repeat units lie at residues 3933 to 3980 (DMII…DWVA), 3981 to 4038 (GNIY…NPKR), 4039 to 4082 (GMMY…DYFS), and 4083 to 4127 (ERIY…FEDY). N4017 carries N-linked (GlcNAc...) asparagine glycosylation. EGF-like domains lie at 4171 to 4208 (DLPN…GTCN), 4213 to 4249 (LDDS…ERCE), 4249 to 4285 (EVNH…PNCG), 4285 to 4321 (GKTV…DRCQ), 4321 to 4357 (QYYV…PKCE), 4357 to 4392 (EVDK…SSCQ), and 4390 to 4427 (SCQL…TQCE). An N-linked (GlcNAc...) asparagine glycan is attached at N4204. Intrachain disulfides connect C4217–C4227, C4221–C4237, C4253–C4263, C4257–C4273, C4275–C4284, C4289–C4299, C4293–C4309, C4311–C4320, C4325–C4335, C4329–C4345, and C4347–C4356. N4381 is a glycosylation site (N-linked (GlcNAc...) asparagine). Disulfide bonds link C4394-C4404, C4398-C4415, and C4417-C4426. A glycan (N-linked (GlcNAc...) asparagine) is linked at N4420. The helical transmembrane segment at 4445–4467 (AIIVPLVLLVTLITTLVIGLVLC) threads the bilayer. The Cytoplasmic portion of the chain corresponds to 4468–4599 (KRKRRTKTIR…IEIGIRETVA (132 aa)). 2 short sequence motifs (endocytosis signal) span residues 4492-4495 (NPSY) and 4559-4562 (NPVY).

This sequence belongs to the LDLR family. Binds LRPAP1, PLAU, PLAT and SERPINE1; binding is followed by internalization and degradation of the ligands. As to expression, expressed in thyroid gland and in salivary gland, as well as in adult and fetal brain.

The protein resides in the membrane. Potential cell surface proteins that bind and internalize ligands in the process of receptor-mediated endocytosis. This is Low-density lipoprotein receptor-related protein 1B (LRP1B) from Homo sapiens (Human).